The primary structure comprises 874 residues: Coatomer subunit gamma-1 (874 aa).

Basic and acidic residues predominate over residues 1 to 11; that stretch reads MLKKFDKKDEE. A disordered region spans residues 1-21; that stretch reads MLKKFDKKDEESGGGSNPLQH. HEAT repeat units follow at residues 64 to 101, 283 to 320, 322 to 355, and 356 to 392; these read TEATEAFFAMTKLFQSNDPTLRRMCYLTIKEMSCIAED, KELAPAVSVLQLFCSSPKAALRYAAVRTLNKVAMKHPS, VTACNLDLENLVTDSNRSIATLAITTLLKTGSES, and SIDRLMKQISSFMSEISDEFKVVVVQAISALCQKYPR. The residue at position 594 (Thr-594) is a Phosphothreonine. The interval 609-874 is interaction with ZNF289/ARFGAP2; it reads RQEIFQEQLA…PVDIILASVG (266 aa).

The protein belongs to the COPG family. Oligomeric complex that consists of at least the alpha, beta, beta', gamma, delta, epsilon and zeta subunits. Interacts with ZNF289/ARFGAP2 through its C-terminal appendage domain. Interacts with EGFR upon EGF treatment; interaction is essential for regulation of EGF-dependent nuclear transport of EGFR by retrograde trafficking from the Golgi to the ER. The coatomer interacts with KDEL receptors; the interaction is important for retrograde trafficking of KDEL-bearing proteins from the Golgi to the endoplasmic reticulum. Interacts with COPB1. Interacts with TMED10 (via C-terminus). Interacts with TMED2, TMED3, TMED7 and TMED9.

It is found in the cytoplasm. Its subcellular location is the cytosol. It localises to the golgi apparatus membrane. The protein resides in the cytoplasmic vesicle. The protein localises to the COPI-coated vesicle membrane. In terms of biological role, the coatomer is a cytosolic protein complex that binds to dilysine motifs and reversibly associates with Golgi non-clathrin-coated vesicles, which further mediate biosynthetic protein transport from the ER, via the Golgi up to the trans Golgi network. Coatomer complex is required for budding from Golgi membranes, and is essential for the retrograde Golgi-to-ER transport of dilysine-tagged proteins. In mammals, the coatomer can only be recruited by membranes associated to ADP-ribosylation factors (ARFs), which are small GTP-binding proteins; the complex also influences the Golgi structural integrity, as well as the processing, activity, and endocytic recycling of LDL receptors. Required for limiting lipid storage in lipid droplets. Involved in lipid homeostasis by regulating the presence of perilipin family members PLIN2 and PLIN3 at the lipid droplet surface and promoting the association of adipocyte triglyceride lipase (PNPLA2) with the lipid droplet surface to mediate lipolysis. This Mus musculus (Mouse) protein is Coatomer subunit gamma-1 (Copg1).